The following is a 313-amino-acid chain: Formimidoylglutamase (313 aa).

Mn(2+) is bound by residues H130, D155, H157, D159, D241, and D243.

Belongs to the arginase family. Mn(2+) is required as a cofactor.

It catalyses the reaction N-formimidoyl-L-glutamate + H2O = formamide + L-glutamate. It functions in the pathway amino-acid degradation; L-histidine degradation into L-glutamate; L-glutamate from N-formimidoyl-L-glutamate (hydrolase route): step 1/1. Functionally, catalyzes the conversion of N-formimidoyl-L-glutamate to L-glutamate and formamide. The protein is Formimidoylglutamase of Citrobacter koseri (strain ATCC BAA-895 / CDC 4225-83 / SGSC4696).